Reading from the N-terminus, the 140-residue chain is Profilin-2 (140 aa).

Residue alanine 2 is modified to N-acetylalanine.

It belongs to the profilin family. As to quaternary structure, occurs in many kinds of cells as a complex with monomeric actin in a 1:1 ratio. Interacts with PFN2. In terms of assembly, interacts with ACTMAP (via N-terminus); the interaction may facilitate efficient cleavage of the acetylated N-terminus of immature actin by ACTMAP. In terms of tissue distribution, highly expressed in brain, skeletal muscle and kidney and less strongly in heart, placenta, lung and liver.

Its subcellular location is the cytoplasm. It is found in the cytoskeleton. Its function is as follows. Binds to actin and affects the structure of the cytoskeleton. At high concentrations, profilin prevents the polymerization of actin, whereas it enhances it at low concentrations. By binding to PIP2, it inhibits the formation of IP3 and DG. The sequence is that of Profilin-2 (PFN2) from Homo sapiens (Human).